Here is a 41-residue protein sequence, read N- to C-terminus: U-AITX-Bg1a (41 aa).

3 cysteine pairs are disulfide-bonded: cysteine 2/cysteine 35, cysteine 4/cysteine 28, and cysteine 18/cysteine 36.

The protein belongs to the sea anemone type 3 (BDS) potassium channel toxin family.

Its subcellular location is the secreted. It localises to the nematocyst. Functionally, potently and selectively inhibits voltage-gated potassium channels Kv11/KCNH/ERG. Acts as a gating-modifier toxin that shifts the voltage-dependence of ERG activation in the positive direction and suppresses its current amplitudes elicited by strong depolarizing pulses that maximally activate the channels. The protein is U-AITX-Bg1a of Bunodosoma granuliferum (Red warty sea anemone).